Reading from the N-terminus, the 589-residue chain is Serine/threonine-protein kinase PknJ (589 aa).

The Cytoplasmic segment spans residues 1–342 (MAHELSAGSV…LPRRPRRYRR (342 aa)). In terms of domain architecture, Protein kinase spans 14 to 276 (YRIERMLGAG…SAGEFAHAAA (263 aa)). ATP is bound by residues 20-28 (LGAGGMGTV) and Lys43. The Proton acceptor role is filled by Asp136. Residues 343–363 (GVAAVAAVMVVAAAAVTAVTM) form a helical membrane-spanning segment. Over 364–589 (TSHQPRTATP…TNYILAKIPG (226 aa)) the chain is Extracellular. The segment covering 365–387 (SHQPRTATPPSAAALSPTSSSTT) has biased composition (low complexity). Positions 365 to 400 (SHQPRTATPPSAAALSPTSSSTTPPQPPIVTRSRLP) are disordered.

This sequence belongs to the protein kinase superfamily. Ser/Thr protein kinase family. As to quaternary structure, homodimer.

Its subcellular location is the cell membrane. It catalyses the reaction L-seryl-[protein] + ATP = O-phospho-L-seryl-[protein] + ADP + H(+). The enzyme catalyses L-threonyl-[protein] + ATP = O-phospho-L-threonyl-[protein] + ADP + H(+). The polypeptide is Serine/threonine-protein kinase PknJ (pknJ) (Mycobacterium bovis (strain ATCC BAA-935 / AF2122/97)).